Reading from the N-terminus, the 73-residue chain is Arabinogalactan protein 16 (73 aa).

Positions 1–26 (MASRNSVTGFALFSFVFAVILSLAGA) are cleaved as a signal peptide. Gln27 bears the Pyrrolidone carboxylic acid mark. 4-hydroxyproline occurs at positions 31, 33, and 35. O-linked (Ara...) hydroxyproline glycosylation is found at Pro31, Pro33, and Pro35. Ser37 is lipidated: GPI-anchor amidated serine. A propeptide spans 38–73 (DGTSIDQGIAYLLMVVALVLTYLIHPLDASSSYSFF) (removed in mature form).

This sequence belongs to the AG-peptide AGP family. Post-translationally, contains 4-hydroxyproline; hydroxylated on Pro-31, Pro-33 and Pro-35. In terms of processing, O-glycosylated on hydroxyprolines; noncontiguous hydroxylproline residues are glycosylated with arabinogalactan. Predominantly expressed in flowers.

The protein resides in the cell membrane. Proteoglycan that seems to be implicated in diverse developmental roles such as differentiation, cell-cell recognition, embryogenesis and programmed cell death. In Arabidopsis thaliana (Mouse-ear cress), this protein is Arabinogalactan protein 16.